Reading from the N-terminus, the 273-residue chain is Putative peptidyl-prolyl cis-trans isomerase Cbf2 (273 aa).

Positions 1 to 21 (MKKFSLVAATLIAGVVLNVNA) are cleaved as a signal peptide. Residues 131–228 (PARVQAKHIL…FGYHVILKEN (98 aa)) form the PpiC domain.

The enzyme catalyses [protein]-peptidylproline (omega=180) = [protein]-peptidylproline (omega=0). The protein is Putative peptidyl-prolyl cis-trans isomerase Cbf2 (cbf2) of Campylobacter jejuni subsp. jejuni serotype O:2 (strain ATCC 700819 / NCTC 11168).